We begin with the raw amino-acid sequence, 463 residues long: Argininosuccinate lyase (463 aa).

Belongs to the lyase 1 family. Argininosuccinate lyase subfamily.

It localises to the cytoplasm. The catalysed reaction is 2-(N(omega)-L-arginino)succinate = fumarate + L-arginine. Its pathway is amino-acid biosynthesis; L-arginine biosynthesis; L-arginine from L-ornithine and carbamoyl phosphate: step 3/3. This chain is Argininosuccinate lyase, found in Streptococcus pneumoniae (strain 70585).